Here is a 151-residue protein sequence, read N- to C-terminus: Deoxyuridine 5'-triphosphate nucleotidohydrolase (151 aa).

Residues 69–71, Asn82, and 86–88 contribute to the substrate site; these read RSG and TID.

The protein belongs to the dUTPase family. Mg(2+) serves as cofactor.

It catalyses the reaction dUTP + H2O = dUMP + diphosphate + H(+). It functions in the pathway pyrimidine metabolism; dUMP biosynthesis; dUMP from dCTP (dUTP route): step 2/2. In terms of biological role, this enzyme is involved in nucleotide metabolism: it produces dUMP, the immediate precursor of thymidine nucleotides and it decreases the intracellular concentration of dUTP so that uracil cannot be incorporated into DNA. The polypeptide is Deoxyuridine 5'-triphosphate nucleotidohydrolase (Rhodospirillum centenum (strain ATCC 51521 / SW)).